Consider the following 1368-residue polypeptide: NEELTLEEKAEICSELELQQKYADIASNIIGDLSSLPMVGKIVGTIAAAAMTVAHVGSGRLDIEQTLLGCSDLPFDQIKEILETRFNEVDRKLESHSAALEEITKLVDKSISAVEKTRKQMNKRFDEVMKSIQDAKVSPIVSKINNFAKYFDAEKERVRGLKLNDYILKLEEPNGILLHFKDVRTPKDDSLQSPLFSIIQERYAIPKTVDDELAFKVLYAILYGTQTYVSVMFFLLEQYSFLANHYYEKGDLEKYDEYFNNLNNVFLDFKSSLVGSGASNNEGLIDNVLQVLMTVKSNEFLGLGKNSLEEMLNEKINLFSKIKEEIEGKQRMTLSETPENFARISFEKDITTPIGDWRDSREVRYAVQYASETLFSKIGHWSDPVSVRAKACPTLRMPVDQTRRNVLVFRKFDNSKPQLVGEITPYQSNFIDIDRDLYNAASNPDSAVGFMEFKKLISNGANIRAVFNQGRTVFHAAAKSGNDKIMIELTFFSKYTDINQPDKKGYTPIHVAADSGNAGIVNLLIRSGISVNSKTYNFLQTPLHLAAQRGFVATFQRLMESPEININERDKDGFTPLHYAVRGGERILEAFINQAGIDVNVKSDKGLTPFHLAVIKNDWPVASTLLRSKKIDINAIDENNMTALHYAAILGFLETTKQLINLKEINANAVSSPGLLSALHYAILYKHDDVALFLLKSSKVNYNLKAFGDITPLHLAVMQGRKQVLSEMFNIGININQKTAEKYTPLHLAAMSKYPELVEILLDQGSNLEAKTITGATPLNLATFKGKSQAALILLKDEVNWREPDENGQMPIHGAAMNGLLDVAQAILYLDATVLDIEDKNLDTPLNLAAQNSHIDMVKYFIDLGAKVNTRNKKGQAPLLAFSKKGNLDMVKYLFDKNANVYIADNDGLNFFYYAVRNGHLNIVKYAMSEKDKFEWSTTDNNRSDGCSGECAISHFAVCDAVQYDKIEIVKYFVGTLGHYSICSPLHQAARYGHIHIVKYLVEEEVLSVDGSKPDTPLCYASENGHLAVVQYLIRNGAKVNHDCANGMTAIDKAITKNQLQVVQILAENGVDFRRKNRLDATPFLTAVASNSYEIAEYLIREKRQNININEQNGNKETALHLAVYYKNLQMIKLLVKYGIDENIRNGYDKTALDIARDNKISSIVEYLQTKSGKFRREYKSSNGEHDLLHENRISNFTDSKNLEYQHQHFINADNDASQSFSNTAANQNIDVIGTLLLIDVLIRRFSKQGYINNKPDSASDGIAQAAALAITEKFEDILNSLHNKSTEEQVDFAEVHRKIYAALRSGRNSQVHQVLCSSLKSISTLKPEDIKKLVSVVLSFQSSISLPEVSASAREVYGETLHLFHES.

Residues 217–236 form a helix H8 is the probable transmembrane region of the tetrameric pore inserted in the target cell membrane region; that stretch reads VLYAILYGTQTYVSVMFFLL. A disulfide bridge links cysteine 392 with cysteine 1044. 20 ANK repeats span residues 469 to 500, 504 to 533, 538 to 568, 572 to 601, 605 to 635, 639 to 669, 674 to 704, 708 to 737, 741 to 770, 774 to 803, 807 to 837, 841 to 870, 874 to 903, 907 to 936, 953 to 981, 982 to 1011, 1013 to 1042, 1046 to 1075, 1079 to 1109, and 1115 to 1144; these read QGRT…DINQ, KGYT…SVNS, FLQT…NINE, DGFT…DVNV, KGLT…DINA, NNMT…NANA, GLLS…NYNL, GDIT…NINQ, EKYT…NLEA, TGAT…NWRE, NGQM…VLDI, NLDT…KVNT, KGQA…NVYI, DGLN…KFEW, ISHF…GHYS, ICSP…SVDG, KPDT…KVNH, NGMT…DFRR, LDAT…NINI, and NKET…DENI. The tract at residues 1174 to 1177 is furin-like endopeptidase recognition region; that stretch reads KFRR. A propeptide spanning residues 1178-1368 is cleaved from the precursor; sequence EYKSSNGEHD…GETLHLFHES (191 aa).

Belongs to the cationic peptide 01 (latrotoxin) family. 03 (alpha-latrotoxin) subfamily. In terms of assembly, homotetramer in membranes. Expressed in venom gland, cephalothorax, and abdomen tissues from both males and females.

The protein resides in the secreted. Its subcellular location is the target cell membrane. In terms of biological role, presynaptic neurotoxin that causes massive release of neurotransmitters from vertebrate (but not invertebrate) nerve terminals and endocrine cells via a complex mechanism involving activation of receptor(s) and toxin insertion into the plasma membrane with subsequent pore formation. Binds to neurexin-1-alpha (NRXN1) in a calcium dependent manner, adhesion G protein-coupled receptor L1 (ADGRL1, also termed latrophilin-1 and calcium-independent receptor of latrotoxin (CIRL)), and receptor-type tyrosine-protein phosphatase S (PTPRS), also termed PTP sigma. NRXN1 and PTPRS are suggested to provide a platform for binding and subsequent pore formation events. In contrast, binding to ADGRL1 does not involve oligomerization and channel formation, but direct downstream stimulation of the synaptic fusion machinery. The protein is Alpha-latrotoxin-Lg1a of Latrodectus geometricus (Brown widow spider).